The sequence spans 429 residues: Glutamate-1-semialdehyde 2,1-aminomutase (429 aa).

Lys268 is modified (N6-(pyridoxal phosphate)lysine).

It belongs to the class-III pyridoxal-phosphate-dependent aminotransferase family. HemL subfamily. Homodimer. Pyridoxal 5'-phosphate is required as a cofactor.

It localises to the cytoplasm. It catalyses the reaction (S)-4-amino-5-oxopentanoate = 5-aminolevulinate. Its pathway is porphyrin-containing compound metabolism; protoporphyrin-IX biosynthesis; 5-aminolevulinate from L-glutamyl-tRNA(Glu): step 2/2. This is Glutamate-1-semialdehyde 2,1-aminomutase from Serratia proteamaculans (strain 568).